The primary structure comprises 286 residues: ATP synthase gamma chain (286 aa).

This sequence belongs to the ATPase gamma chain family. F-type ATPases have 2 components, CF(1) - the catalytic core - and CF(0) - the membrane proton channel. CF(1) has five subunits: alpha(3), beta(3), gamma(1), delta(1), epsilon(1). CF(0) has three main subunits: a, b and c.

The protein resides in the cell inner membrane. Functionally, produces ATP from ADP in the presence of a proton gradient across the membrane. The gamma chain is believed to be important in regulating ATPase activity and the flow of protons through the CF(0) complex. This is ATP synthase gamma chain from Pseudomonas fluorescens (strain Pf0-1).